Consider the following 309-residue polypeptide: MSENIIRIATRKSPLAMWQAEFVKAELERIHPGLTVELLPMSTKGDVILDTPLAKIGGKGLFVKELEVAMLENRADIAVHSMKDLPVEFPEGLGLQVICEREDPRDAFVSNNYKSISELPQGAVVGTSSLRRQCQIRAARPDLVIKDLRGNVGTRLAKLDSGDYDAIILAAAGLIRLKLNERIANFISAEESLPANGQGAVGIECRTDDARVKALLAPLEHLETRYRVLAERAMNTRLEGGCQVPIGAFAEINGDNLTLRGLVGNPDGSQIIIGTVSGSKTDAVALGESLAEDLLSRGAKTILDAVYAS.

Cys-242 carries the post-translational modification S-(dipyrrolylmethanemethyl)cysteine.

Belongs to the HMBS family. Monomer. Requires dipyrromethane as cofactor.

It carries out the reaction 4 porphobilinogen + H2O = hydroxymethylbilane + 4 NH4(+). Its pathway is porphyrin-containing compound metabolism; protoporphyrin-IX biosynthesis; coproporphyrinogen-III from 5-aminolevulinate: step 2/4. Functionally, tetrapolymerization of the monopyrrole PBG into the hydroxymethylbilane pre-uroporphyrinogen in several discrete steps. The sequence is that of Porphobilinogen deaminase from Shewanella frigidimarina (strain NCIMB 400).